The following is a 354-amino-acid chain: Tryptophan--tRNA ligase (354 aa).

Residues 13–15 (QPT) and 21–22 (GN) each bind ATP. A 'HIGH' region motif is present at residues 14–22 (PTGNLHLGN). D137 is an L-tryptophan binding site. ATP contacts are provided by residues 149 to 151 (GDD), V208, and 217 to 221 (KMSKS). Residues 217–221 (KMSKS) carry the 'KMSKS' region motif.

The protein belongs to the class-I aminoacyl-tRNA synthetase family. In terms of assembly, homodimer.

It is found in the cytoplasm. It carries out the reaction tRNA(Trp) + L-tryptophan + ATP = L-tryptophyl-tRNA(Trp) + AMP + diphosphate + H(+). Its function is as follows. Catalyzes the attachment of tryptophan to tRNA(Trp). This chain is Tryptophan--tRNA ligase, found in Agrobacterium fabrum (strain C58 / ATCC 33970) (Agrobacterium tumefaciens (strain C58)).